The sequence spans 767 residues: Photosystem I P700 chlorophyll a apoprotein A1 (767 aa).

The disordered stretch occupies residues 1-22; that stretch reads MTISPPESGEKNKKVLEDPVKA. The segment covering 8 to 22 has biased composition (basic and acidic residues); that stretch reads SGEKNKKVLEDPVKA. 8 helical membrane-spanning segments follow: residues 76–99, 162–185, 201–225, 309–327, 368–391, 407–433, 455–477, and 558–576; these read IFSA…FHGA, LMAL…YHYH, LNHH…HIGA, IAHH…GHLY, RHAQ…HHMY, LGLF…IAMV, ALIS…LYIH, and LMIH…LILL. [4Fe-4S] cluster contacts are provided by C600 and C609. Transmembrane regions (helical) follow at residues 616–637 and 681–703; these read HVFL…HFSW and ISMY…MFLF. H692 is a binding site for divinylchlorophyll a'. Divinyl chlorophyll a contacts are provided by M700 and Y708. Position 709 (W709) interacts with phylloquinone. A helical membrane pass occupies residues 741-761; that stretch reads AVGVAHFLLGGIATTWAFFHA.

The protein belongs to the PsaA/PsaB family. As to quaternary structure, the PsaA/B heterodimer binds the P700 divinyl chlorophyll special pair and subsequent electron acceptors. PSI consists of a core antenna complex that captures photons, and an electron transfer chain that converts photonic excitation into a charge separation. The cyanobacterial PSI reaction center is composed of one copy each of PsaA,B,C,D,E,F,I,J,K,L,M and X, and forms trimeric complexes. The cofactor is PSI electron transfer chain: 5 divinyl chlorophyll a, 1 divinyl chlorophyll a', 2 phylloquinones and 3 4Fe-4S clusters. PSI core antenna: 90 divinyl chlorophyll a, 22 carotenoids, 3 phospholipids and 1 galactolipid. P700 is a divinyl chlorophyll a/divinyl chlorophyll a' dimer, A0 is one or more divinyl chlorophyll a, A1 is one or both phylloquinones and FX is a shared 4Fe-4S iron-sulfur center..

It localises to the cellular thylakoid membrane. The enzyme catalyses reduced [plastocyanin] + hnu + oxidized [2Fe-2S]-[ferredoxin] = oxidized [plastocyanin] + reduced [2Fe-2S]-[ferredoxin]. PsaA and PsaB bind P700, the primary electron donor of photosystem I (PSI), as well as the electron acceptors A0, A1 and FX. PSI is a plastocyanin/cytochrome c6-ferredoxin oxidoreductase, converting photonic excitation into a charge separation, which transfers an electron from the donor P700 chlorophyll pair to the spectroscopically characterized acceptors A0, A1, FX, FA and FB in turn. Oxidized P700 is reduced on the lumenal side of the thylakoid membrane by plastocyanin or cytochrome c6. The sequence is that of Photosystem I P700 chlorophyll a apoprotein A1 from Prochlorococcus marinus (strain MIT 9312).